Here is a 588-residue protein sequence, read N- to C-terminus: Zeta-carotene desaturase, chloroplastic/chromoplastic (588 aa).

This sequence belongs to the zeta carotene desaturase family. It depends on NAD(+) as a cofactor. NADP(+) serves as cofactor. FAD is required as a cofactor.

The protein localises to the plastid. It is found in the chloroplast. It localises to the chromoplast. It carries out the reaction 9,9'-di-cis-zeta-carotene + 2 a quinone = 7,7',9,9'-tetra-cis-lycopene + 2 a quinol. The protein operates within carotenoid biosynthesis; lycopene biosynthesis. In terms of biological role, catalyzes the conversion of zeta-carotene to lycopene via the intermediary of neurosporene. It carries out two consecutive desaturations (introduction of double bonds) at positions C-7 and C-7'. The sequence is that of Zeta-carotene desaturase, chloroplastic/chromoplastic (ZDS) from Solanum lycopersicum (Tomato).